The sequence spans 381 residues: NF-kappa-B inhibitor-like protein 1 (381 aa).

The segment at 1 to 32 (MSNPSPQAPEEEASTSVCRPQSSMASVSRRHR) is disordered. The segment covering 14-26 (STSVCRPQSSMAS) has biased composition (polar residues). 2 ANK repeats span residues 64–93 (GQPP…DPAH) and 97–133 (HGDT…IKNK). Disordered stretches follow at residues 129-166 (GIKN…REWR), 186-242 (DDAS…QEEE), and 257-294 (LCES…RGSL). Phosphoserine is present on serine 150. A compositionally biased stretch (acidic residues) spans 150-159 (SAEEEEDEEV). 2 stretches are compositionally biased toward basic and acidic residues: residues 204–228 (RLAR…RPPR) and 257–270 (LCES…EAQG).

Interacts with CACTIN (via N-terminal domain); the interaction occurs in a pro-inflammatory-independent manner.

The protein resides in the nucleus. In terms of biological role, involved in the regulation of innate immune response. Acts as negative regulator of Toll-like receptor and interferon-regulatory factor (IRF) signaling pathways. Contributes to the negative regulation of transcriptional activation of NF-kappa-B target genes in response to endogenous pro-inflammatory stimuli. The protein is NF-kappa-B inhibitor-like protein 1 (Nfkbil1) of Rattus norvegicus (Rat).